The chain runs to 562 residues: Pentatricopeptide repeat-containing protein At3g22670, mitochondrial (562 aa).

A mitochondrion-targeting transit peptide spans 1–31 (MLTKLRISKLVSYTLPRRIFQRRFLVTNNTA). PPR repeat units follow at residues 165 to 199 (SGHT…EESK), 202 to 232 (TLDT…MEKS), 238 to 268 (DTIA…LFDT), 272 to 306 (DART…EFTP), 307 to 341 (DVVT…GCNP), 342 to 376 (NVVT…GCVP), 377 to 411 (DAKF…GVRR), 412 to 446 (DVLV…EGES), 450 to 484 (NVET…DVSI), and 485 to 519 (DVST…GMVP).

The protein belongs to the PPR family. P subfamily.

The protein localises to the mitochondrion. In Arabidopsis thaliana (Mouse-ear cress), this protein is Pentatricopeptide repeat-containing protein At3g22670, mitochondrial.